A 178-amino-acid polypeptide reads, in one-letter code: DELTA-miturgitoxin-Cp3a (178 aa).

The N-terminal stretch at 1 to 18 (MKALYLLGLLAFLYSCSS) is a signal peptide. Residues 19-46 (ENVYDLQPESSEEENPGTFLEAIQEQSR) constitute a propeptide that is removed on maturation. Positions 43–46 (EQSR) match the Processing quadruplet motif motif. 8 cysteine pairs are disulfide-bonded: C48-C63, C55-C72, C62-C86, C74-C84, C113-C128, C120-C137, C127-C155, and C139-C153.

Belongs to the spider toxin CSTX family. Double-CSTX subfamily. Cleavage of the propeptide depends on the processing quadruplet motif (XXXR, with at least one of X being E). Expressed by the venom gland.

Its subcellular location is the secreted. In terms of biological role, spider venom toxin that exhibits cytolytic activity by forming an alpha-helix across the membrane. Lethal to insect larvae. The sequence is that of DELTA-miturgitoxin-Cp3a from Cheiracanthium punctorium (Yellow sac spider).